The chain runs to 109 residues: Membrane-bound lysozyme inhibitor of C-type lysozyme (109 aa).

The signal sequence occupies residues 1–17 (MTMKKLLIIILPVLLSG). A lipid anchor (N-palmitoyl cysteine) is attached at Cys-18. Cys-18 carries S-diacylglycerol cysteine lipidation. A disulfide bridge connects residues Cys-37 and Cys-102.

The protein belongs to the MliC family. Type 1 subfamily. Monomer.

The protein localises to the cell outer membrane. Functionally, specifically inhibits C-type lysozymes. The chain is Membrane-bound lysozyme inhibitor of C-type lysozyme from Escherichia coli (strain K12).